A 255-amino-acid chain; its full sequence is Flap endonuclease Xni (255 aa).

D105 lines the Mg(2+) pocket. The 91-residue stretch at 163–253 folds into the 5'-3' exonuclease domain; that stretch reads QYQMLDFIAL…NLKQFRINPI (91 aa). K(+)-binding residues include L172, A173, P181, I183, and I186. An interaction with DNA region spans residues 185 to 190; that stretch reads GIGPKS.

The protein belongs to the Xni family. Mg(2+) serves as cofactor. K(+) is required as a cofactor.

Its function is as follows. Has flap endonuclease activity. During DNA replication, flap endonucleases cleave the 5'-overhanging flap structure that is generated by displacement synthesis when DNA polymerase encounters the 5'-end of a downstream Okazaki fragment. The protein is Flap endonuclease Xni of Shewanella frigidimarina (strain NCIMB 400).